The sequence spans 411 residues: Translation initiation factor 2 subunit gamma (411 aa).

The 195-residue stretch at Q9–K203 folds into the tr-type G domain. Residues G18–T25 form a G1 region. Mg(2+) contacts are provided by D21, T25, G46, and S48. Residue D21 to S26 participates in GTP binding. Residues G46–R50 are G2. Residues C61, C64, C73, and C76 each contribute to the Zn(2+) site. A G3 region spans residues D90–G93. Residues N146–D149 and S181–H183 each bind GTP. A G4 region spans residues N146 to D149. The interval S181–H183 is G5.

It belongs to the TRAFAC class translation factor GTPase superfamily. Classic translation factor GTPase family. EIF2G subfamily. As to quaternary structure, heterotrimer composed of an alpha, a beta and a gamma chain. Mg(2+) serves as cofactor.

It carries out the reaction GTP + H2O = GDP + phosphate + H(+). EIF-2 functions in the early steps of protein synthesis by forming a ternary complex with GTP and initiator tRNA. The chain is Translation initiation factor 2 subunit gamma from Methanocaldococcus jannaschii (strain ATCC 43067 / DSM 2661 / JAL-1 / JCM 10045 / NBRC 100440) (Methanococcus jannaschii).